Here is a 351-residue protein sequence, read N- to C-terminus: Short-chain dehydrogenase sdnK (351 aa).

Positions 46, 66, 98, 224, 228, and 268 each coordinate NADP(+). Tyr224 functions as the Proton donor in the catalytic mechanism. The active-site Lowers pKa of active site Tyr is the Lys228.

It belongs to the short-chain dehydrogenases/reductases (SDR) family.

It participates in antibiotic biosynthesis. Its function is as follows. Short-chain dehydrogenase; part of the gene cluster that mediates the biosynthesis of sordarin and hypoxysordarin, glycoside antibiotics with a unique tetracyclic diterpene aglycone structure. First, the geranylgeranyl diphosphate synthase sdnC constructs GGDP from farnesyl diphosphate and isopentenyl diphosphate. The diterpene cyclase sdnA then catalyzes the cyclization of GGDP to afford cycloaraneosene. Cycloaraneosene is then hydroxylated four times by the putative cytochrome P450 monooxygenases sdnB, sdnE, sdnF and sdnH to give a hydroxylated cycloaraneosene derivative such as cycloaraneosene-8,9,13,19-tetraol. Although the order of the hydroxylations is unclear, at least C8, C9 and C13 of the cycloaraneosene skeleton are hydroxylated before the sordaricin formation. Dehydration of the 13-hydroxy group of the hydroxylated cycloaraneosene derivative might be catalyzed by an unassigned hypothetical protein such as sdnG and sdnP to construct the cyclopentadiene moiety. The FAD-dependent oxidoreductase sdnN is proposed to catalyze the oxidation at C9 of the hydroxylated cycloaraneosene derivative and also catalyze the Baeyer-Villiger oxidation to give the lactone intermediate. The presumed lactone intermediate would be hydrolyzed to give an acrolein moiety and a carboxylate moiety. Then, [4+2]cycloaddition would occur between the acrolein moiety and the cyclopentadiene moiety to give sordaricin. SdnN might also be involved in the [4+2]cycloaddition after the hypothesized oxidation to accommodate the oxidized product and prompt the [4+2]cycloaddition. GDP-6-deoxy-D-altrose may be biosynthesized from GDP-D-mannose by the putative GDP-mannose-4,6-dehydratase sdnI and the short-chain dehydrogenase sdnK. The glycosyltransferase sdnJ catalyzes the attachment of 6-deoxy-D-altrose onto the 19-hydroxy group of sordaricin to give 4'-O-demethylsordarin. The methyltransferase sdnD would complete the biosynthesis of sordarin. Sordarin can be further modified into hypoxysordarin. The unique acyl chain at the 3'-hydroxy group of hypoxysordarin would be constructed by an iterative type I PKS sdnO and the trans-acting polyketide methyltransferase sdnL. SdnL would be responsible for the introduction of an alpha-methyl group of the polyketide chain. Alternatively, the beta-lactamase-like protein sdnR might be responsible for the cleavage and transfer of the polyketide chain from the PKS sdnO to sordarin. Two putative cytochrome P450 monooxygenases, sdnQ and sdnT, might catalyze the epoxidations of the polyketide chain to complete the biosynthesis of hypoxysordarin. Transcriptional regulators sdnM and sdnS are presumably encoded for the transcriptional regulation of the expression of the sdn gene cluster. The polypeptide is Short-chain dehydrogenase sdnK (Sordaria araneosa (Pleurage araneosa)).